Consider the following 206-residue polypeptide: Dephospho-CoA kinase (206 aa).

The DPCK domain occupies 4–204 (IVGLTGGIGS…HQYLQLANAQ (201 aa)). 12–17 (GSGKST) contributes to the ATP binding site.

Belongs to the CoaE family.

The protein localises to the cytoplasm. It catalyses the reaction 3'-dephospho-CoA + ATP = ADP + CoA + H(+). The protein operates within cofactor biosynthesis; coenzyme A biosynthesis; CoA from (R)-pantothenate: step 5/5. Functionally, catalyzes the phosphorylation of the 3'-hydroxyl group of dephosphocoenzyme A to form coenzyme A. The protein is Dephospho-CoA kinase of Pasteurella multocida (strain Pm70).